Consider the following 202-residue polypeptide: Small ribosomal subunit protein uS4 (202 aa).

The segment at 23 to 42 (RKAARRSYPPGQHGQARRKR) is disordered. In terms of domain architecture, S4 RNA-binding spans 90 to 154 (MRLDNLVFRL…SRKLVTANLE (65 aa)).

The protein belongs to the universal ribosomal protein uS4 family. Part of the 30S ribosomal subunit. Contacts protein S5. The interaction surface between S4 and S5 is involved in control of translational fidelity.

One of the primary rRNA binding proteins, it binds directly to 16S rRNA where it nucleates assembly of the body of the 30S subunit. In terms of biological role, with S5 and S12 plays an important role in translational accuracy. In Synechococcus elongatus (strain ATCC 33912 / PCC 7942 / FACHB-805) (Anacystis nidulans R2), this protein is Small ribosomal subunit protein uS4.